A 267-amino-acid polypeptide reads, in one-letter code: AMP/ADP-polyphosphate phosphotransferase (267 aa).

It belongs to the polyphosphate kinase 2 (PPK2) family. Class III subfamily. It depends on Mn(2+) as a cofactor.

The enzyme catalyses [phosphate](n) + ADP = [phosphate](n+1) + AMP. The catalysed reaction is [phosphate](n) + ATP = [phosphate](n+1) + ADP. In terms of biological role, uses inorganic polyphosphate (polyP) as a donor to convert both AMP to ADP and ADP to ATP. Can also use GMP, CMP, UMP, GDP, CDP and UDP. This Meiothermus ruber (strain ATCC 35948 / DSM 1279 / VKM B-1258 / 21) (Thermus ruber) protein is AMP/ADP-polyphosphate phosphotransferase.